Reading from the N-terminus, the 617-residue chain is Sodium-dependent noradrenaline transporter (617 aa).

The disordered stretch occupies residues 1-23; it reads MLLARMNPQVQPENNGADTGPEQ. Residues 1–62 are Cytoplasmic-facing; the sequence is MLLARMNPQV…AQPRETWGKK (62 aa). Residues 8 to 17 show a composition bias toward polar residues; sequence PQVQPENNGA. The helical transmembrane segment at 63-88 threads the bilayer; it reads IDFLLSVVGFAVDLANVWRFPYLCYK. 3 residues coordinate Na(+): G71, A73, and V74. D75 lines the (R)-noradrenaline pocket. D75 lines the dopamine pocket. Residue N78 coordinates Na(+). The (R)-noradrenaline site is built by Y87 and K88. At 89 to 92 the chain is on the extracellular side; the sequence is NGGG. The helical transmembrane segment at 93 to 116 threads the bilayer; it reads AFLIPYTLFLIIAGMPLFYMELAL. Over 117-135 the chain is Cytoplasmic; it reads GQYNREGAATVWKICPFFK. Residues 136–166 form a helical membrane-spanning segment; the sequence is GVGYAVILIALYVGFYYNVIIAWSLYYLFSS. (R)-noradrenaline is bound by residues A145 and G149. A145 provides a ligand contact to dopamine. Residues 167–233 are Extracellular-facing; that stretch reads FTLNLPWTDC…SSGIHDIGLP (67 aa). The cysteines at positions 176 and 185 are disulfide-linked. N-linked (GlcNAc...) asparagine glycans are attached at residues N184, N192, and N198. The chain crosses the membrane as a helical span at residues 234–254; that stretch reads QWQLLLCLMVVVIVLYFSLWK. The Cytoplasmic segment spans residues 255–257; the sequence is GVK. A helical transmembrane segment spans residues 258–282; sequence TSGKVVWITATLPYFVLFVLLVHGV. Over 283–306 the chain is Extracellular; the sequence is TLPGASNGINAYLHIDFYRLKEAT. Residues 307 to 332 traverse the membrane as a helical segment; it reads VWIDAATQIFFSLGAGFGVLIAFASY. F317 is a (R)-noradrenaline binding site. Position 317 (F317) interacts with dopamine. Residue S318 coordinates Na(+). The Cytoplasmic portion of the chain corresponds to 333–338; sequence NKFDNN. The helical transmembrane segment at 339-362 threads the bilayer; that stretch reads CYRDALLTSSINCITSFVSGFAIF. Position 350 (N350) interacts with Na(+). Residues 363–402 are Extracellular-facing; it reads SILGYMAHEHKVNIEDVATEGAGLVFILYPEAISTLSGST. E382 lines the (R)-noradrenaline pocket. Residue E382 coordinates dopamine. Residues 403–428 form a helical membrane-spanning segment; it reads FWAVVFFVMLLALGLDSSMGGMEAVI. Residues D418 and S419 each contribute to the Na(+) site. The Cytoplasmic portion of the chain corresponds to 429 to 443; it reads TGLADDFQVLKRHRK. Residues 444-464 traverse the membrane as a helical segment; sequence LFTFGVTFSTFLLALFCITKG. A topological domain (extracellular) is located at residue G465. A helical membrane pass occupies residues 466 to 492; the sequence is IYVLTLLDTFAAGTSILFAVLMEAIGV. At 493–522 the chain is on the cytoplasmic side; it reads SWFYGVDRFSNDIQQMMGFRPGLYWRLCWK. A helical transmembrane segment spans residues 523-545; the sequence is FVSPAFLLFVVVVSIINFKPLTY. The Extracellular segment spans residues 546–548; the sequence is DDY. Residues 549–569 form a helical membrane-spanning segment; it reads IFPPWANWVGWGIALSSMVLV. The Cytoplasmic segment spans residues 570-617; the sequence is PIYVIYKFLSTQGSLWERLAYGITPENEHHLVAQRDIRQFQLQHWLAI.

The protein belongs to the sodium:neurotransmitter symporter (SNF) (TC 2.A.22) family. SLC6A2 subfamily. In terms of assembly, monomer. Can form homodimers in the cell membrane; homodimerization is mostly mediated by cholesterol and lipids, and regulates neurotransmitter transport activity. Interacts with PRKCABP. In terms of processing, palmitoylated; palmitoylation regulates protein levels and neurotransmitter transport.

It localises to the cell membrane. It is found in the cell projection. The protein localises to the axon. Its subcellular location is the synapse. The protein resides in the synaptosome. The catalysed reaction is (R)-noradrenaline(out) + chloride(out) + Na(+)(out) = (R)-noradrenaline(in) + chloride(in) + Na(+)(in). It catalyses the reaction dopamine(out) + chloride(out) + Na(+)(out) = dopamine(in) + chloride(in) + Na(+)(in). It carries out the reaction dopamine(out) + chloride(out) + 2 Na(+)(out) = dopamine(in) + chloride(in) + 2 Na(+)(in). Its activity is regulated as follows. Inhibited by mazindol, desipramine, nomifensine and nortriptyline. Its function is as follows. Mediates sodium- and chloride-dependent transport of norepinephrine (also known as noradrenaline), the primary signaling neurotransmitter in the autonomic sympathetic nervous system. Is responsible for norepinephrine re-uptake and clearance from the synaptic cleft, thus playing a crucial role in norepinephrine inactivation and homeostasis. Can also mediate sodium- and chloride-dependent transport of dopamine. The chain is Sodium-dependent noradrenaline transporter from Homo sapiens (Human).